We begin with the raw amino-acid sequence, 472 residues long: Methanethiol oxidase (472 aa).

Position 2 is an N-acetylalanine (A2). Phosphoserine occurs at positions 111, 371, and 467.

Belongs to the selenium-binding protein family. As to quaternary structure, interacts with USP33. Post-translationally, phosphorylated. In terms of processing, the N-terminus is blocked. Widely expressed. Highly expressed in liver, lung, colon, prostate, kidney and pancreas. In brain, present both in neurons and glia (at protein level). Down-regulated in lung adenocarcinoma, colorectal carcinoma and ovarian cancer. Two-fold up-regulated in brain and blood from schizophrenia patients.

It is found in the nucleus. Its subcellular location is the cytoplasm. The protein resides in the cytosol. The protein localises to the membrane. It carries out the reaction methanethiol + O2 + H2O = hydrogen sulfide + formaldehyde + H2O2 + H(+). It functions in the pathway organosulfur degradation. Catalyzes the oxidation of methanethiol, an organosulfur compound known to be produced in substantial amounts by gut bacteria. Selenium-binding protein which may be involved in the sensing of reactive xenobiotics in the cytoplasm. May be involved in intra-Golgi protein transport. In Homo sapiens (Human), this protein is Methanethiol oxidase (SELENBP1).